Here is an 818-residue protein sequence, read N- to C-terminus: Dipeptidyl aminopeptidase B (818 aa).

Residues 1-29 (MEGGEEEVERIPDELFDTKKKHLLDKLIR) are Cytoplasmic-facing. The chain crosses the membrane as a helical; Signal-anchor for type II membrane protein span at residues 30-45 (VGIILVLLIWGTVLLL). The Lumenal portion of the chain corresponds to 46–818 (KSIPHHSNTP…KRAFDGQFVK (773 aa)). Asn63, Asn79, Asn110, Asn139, Asn372, Asn392, and Asn421 each carry an N-linked (GlcNAc...) asparagine glycan. The active-site Charge relay system is the Ser679. Asn738 is a glycosylation site (N-linked (GlcNAc...) asparagine). Residues Asp756 and His789 each act as charge relay system in the active site.

It belongs to the peptidase S9B family.

It is found in the vacuole membrane. In Saccharomyces cerevisiae (strain ATCC 204508 / S288c) (Baker's yeast), this protein is Dipeptidyl aminopeptidase B (DAP2).